Reading from the N-terminus, the 266-residue chain is Undecaprenyl-diphosphatase (266 aa).

The next 7 helical transmembrane spans lie at 39–59, 86–106, 112–132, 147–167, 189–209, 216–236, and 246–266; these read PGASLSATIQLGSVIAIAYYF, SIFIGTIPIVLLGGSIKIFIP, VLRSNLSIALVSFLMAFFMYL, NFSNSFLIGIFQAFAIFPGVS, FSFLLGMPAISLAAIVEFVSS, LGFFPLFVGLITTFLSSLLAI, and NGLKIFIIYRVIFGVVILLNL.

It belongs to the UppP family.

The protein resides in the cell inner membrane. The enzyme catalyses di-trans,octa-cis-undecaprenyl diphosphate + H2O = di-trans,octa-cis-undecaprenyl phosphate + phosphate + H(+). Functionally, catalyzes the dephosphorylation of undecaprenyl diphosphate (UPP). Confers resistance to bacitracin. The polypeptide is Undecaprenyl-diphosphatase (Prochlorococcus marinus (strain MIT 9301)).